A 37-amino-acid chain; its full sequence is Large ribosomal subunit protein bL36 (37 aa).

It belongs to the bacterial ribosomal protein bL36 family.

This chain is Large ribosomal subunit protein bL36, found in Listeria innocua serovar 6a (strain ATCC BAA-680 / CLIP 11262).